We begin with the raw amino-acid sequence, 255 residues long: Uracil-DNA glycosylase (255 aa).

The interval 1–20 (MFSASTTPEQPLGLSGDATP) is disordered. Asp99 functions as the Proton acceptor in the catalytic mechanism.

The protein belongs to the uracil-DNA glycosylase (UDG) superfamily. UNG family.

The protein localises to the host nucleus. The enzyme catalyses Hydrolyzes single-stranded DNA or mismatched double-stranded DNA and polynucleotides, releasing free uracil.. Its function is as follows. Excises uracil residues from the DNA which can arise as a result of misincorporation of dUMP residues by DNA polymerase or deamination of cytosines. Therefore may reduce deleterious uracil incorporation into the viral genome, particularly in terminally differentiated cells which lack DNA repair enzymes. The protein is Uracil-DNA glycosylase of Human herpesvirus 2 (strain HG52) (HHV-2).